Here is a 377-residue protein sequence, read N- to C-terminus: MIRGNDPILLTPGPLTTSLATKQAMLRDWGSWDAAFNAITRSLCDDLVRIVHGEGTHVCVPMQGSGTFSVEAAIANVVPRDGKVLVPQNGAYCQRILKICKVLGRASVELPIPEDQPATAALIEEAIRRDPSITHVAQVHCETGAGVLNPLQEIAALCQRLGKGLIVDAMSSFGAIEIDARTMPFDALVAATGKCIEGVPGMGFVLVKKDVLEASQGNSHSLALDLYDQYVYMQKTTQWRFTPPTHVVAAFRTALDQFLEEGGQPVRGARYRRNCDALVQGMAALGFRAFLPAAVQAPIIVTFHAPADARYDFKTFYARVRERGYILYPGKLTQMETFRVGCIGAIDDNEMRNVVTAIGEVLREMGIKMQAPLAEAA.

Lys-194 carries the post-translational modification N6-(pyridoxal phosphate)lysine.

Belongs to the class-V pyridoxal-phosphate-dependent aminotransferase family. PhnW subfamily. As to quaternary structure, homodimer. Requires pyridoxal 5'-phosphate as cofactor.

It carries out the reaction (2-aminoethyl)phosphonate + pyruvate = phosphonoacetaldehyde + L-alanine. Involved in phosphonate degradation. This Cupriavidus necator (strain ATCC 17699 / DSM 428 / KCTC 22496 / NCIMB 10442 / H16 / Stanier 337) (Ralstonia eutropha) protein is 2-aminoethylphosphonate--pyruvate transaminase.